A 308-amino-acid polypeptide reads, in one-letter code: uncharacterized protein (308 aa).

Residues 43-55 (SQYGTWADQHQNG) are compositionally biased toward polar residues. The segment at 43–289 (SQYGTWADQH…KEERSEECSP (247 aa)) is disordered. Phosphoserine is present on serine 62. Polar residues predominate over residues 80–90 (HLSSYTESTSV). The segment covering 91–109 (EQRDSSRDRRSSSVDRSSS) has biased composition (basic and acidic residues). A compositionally biased stretch (polar residues) spans 136 to 152 (IHQTSVLDSSALKTRVQ). Positions 153–168 (LSKRSRRRAPISHSLR) are enriched in basic residues. Serine 166 is modified (phosphoserine). Composition is skewed to basic and acidic residues over residues 175 to 186 (SESRSPLEEESH) and 193 to 216 (DSTE…ERTP). Serine 205, serine 259, serine 262, and serine 288 each carry phosphoserine.

This is an uncharacterized protein from Mus musculus (Mouse).